Here is a 1086-residue protein sequence, read N- to C-terminus: Lon protease homolog, mitochondrial (1086 aa).

Residues 1-55 (MLRTSCTSSLRRVVGKYVVSPLVASQIRFATSSVRSQPYLLNSELTELPAQFKRY) constitute a mitochondrion transit peptide. A disordered region spans residues 61 to 176 (TEKPEGDVPE…EPNEIVTNAG (116 aa)). Positions 69-83 (PESGPEPSGESGISE) are enriched in low complexity. Basic and acidic residues predominate over residues 85-120 (SNVENDKHDGNDEIKPEAEKNEKDEIEKPEIDKDAI). A compositionally biased stretch (low complexity) spans 124–163 (DGVSESSVENVSGSSSAAGGASAPPSGNSNNNNNNNNNNN). Residues 183–406 (LLAIPMKDRP…KALELLKVEL (224 aa)) enclose the Lon N-terminal domain. 558-565 (GPPGTGKT) contacts ATP. Composition is skewed to basic and acidic residues over residues 767 to 782 (EAREGESKSKSEEAKS) and 815 to 827 (KVDEAKPVESEEL). Disordered stretches follow at residues 767-788 (EAREGESKSKSEEAKSEAITGS) and 800-835 (KAQSIEEPSVESASQKVDEAKPVESEELKSDEEEEE). Positions 871 to 1059 (IPPPGVATGL…QDVFDEIFPN (189 aa)) constitute a Lon proteolytic domain. Catalysis depends on residues serine 965 and lysine 1008.

Belongs to the peptidase S16 family. In terms of assembly, homohexamer or homoheptamer. Organized in a ring with a central cavity.

The protein resides in the mitochondrion matrix. The catalysed reaction is Hydrolysis of proteins in presence of ATP.. ATP-dependent serine protease that mediates the selective degradation of misfolded, unassembled or oxidatively damaged polypeptides as well as certain short-lived regulatory proteins in the mitochondrial matrix. May also have a chaperone function in the assembly of inner membrane protein complexes. Participates in the regulation of mitochondrial gene expression and in the maintenance of the integrity of the mitochondrial genome. Binds to mitochondrial DNA in a site-specific manner. The sequence is that of Lon protease homolog, mitochondrial from Scheffersomyces stipitis (strain ATCC 58785 / CBS 6054 / NBRC 10063 / NRRL Y-11545) (Yeast).